Reading from the N-terminus, the 133-residue chain is Urease subunit beta (133 aa).

The segment at Val106–Lys133 is disordered.

Belongs to the urease beta subunit family. Heterotrimer of UreA (gamma), UreB (beta) and UreC (alpha) subunits. Three heterotrimers associate to form the active enzyme.

The protein localises to the cytoplasm. It carries out the reaction urea + 2 H2O + H(+) = hydrogencarbonate + 2 NH4(+). The protein operates within nitrogen metabolism; urea degradation; CO(2) and NH(3) from urea (urease route): step 1/1. This is Urease subunit beta from Staphylococcus epidermidis (strain ATCC 12228 / FDA PCI 1200).